Reading from the N-terminus, the 510-residue chain is Beta-glucosidase 40 (510 aa).

The N-terminal stretch at 1-29 is a signal peptide; sequence MAHRRLIMTMTKMMMMVTMMMMMDKTCIC. A beta-D-glucoside is bound by residues Gln-51, His-152, and 197–198; that span reads NE. Residue Glu-198 is the Proton donor of the active site. Cys-217 and Cys-225 form a disulfide bridge. N-linked (GlcNAc...) asparagine glycosylation is found at Asn-229 and Asn-278. Tyr-341 serves as a coordination point for a beta-D-glucoside. A glycan (N-linked (GlcNAc...) asparagine) is linked at Asn-349. Residues Glu-414, Trp-464, 471–472, and Phe-480 contribute to the a beta-D-glucoside site; that span reads EW. Glu-414 functions as the Nucleophile in the catalytic mechanism. Residue Asn-507 is glycosylated (N-linked (GlcNAc...) asparagine).

Belongs to the glycosyl hydrolase 1 family.

It carries out the reaction Hydrolysis of terminal, non-reducing beta-D-glucosyl residues with release of beta-D-glucose.. This chain is Beta-glucosidase 40, found in Arabidopsis thaliana (Mouse-ear cress).